Here is a 446-residue protein sequence, read N- to C-terminus: Exodeoxyribonuclease 7 large subunit (446 aa).

The protein belongs to the XseA family. Heterooligomer composed of large and small subunits.

Its subcellular location is the cytoplasm. It carries out the reaction Exonucleolytic cleavage in either 5'- to 3'- or 3'- to 5'-direction to yield nucleoside 5'-phosphates.. Bidirectionally degrades single-stranded DNA into large acid-insoluble oligonucleotides, which are then degraded further into small acid-soluble oligonucleotides. This is Exodeoxyribonuclease 7 large subunit from Xanthomonas campestris pv. campestris (strain B100).